A 328-amino-acid chain; its full sequence is uncharacterized protein (328 aa).

Coiled coils occupy residues 67–190 (FKEQ…VLEE) and 223–251 (MAQR…DNMM).

This is an uncharacterized protein from Mus musculus (Mouse).